The following is a 412-amino-acid chain: MQTLDRPNAPSQQPYPEPVYPRRPTRTVAVGNVLIGSQHPVVVQSMINEDTLDIDAAVAAIRRLHEAGSEIVRVTVPSMAHAKAMEAIRSKLIQTYKPVPLVADVHHNGIKIALEVAQYVDKVRINPGLFVLEKPQPGRTEYTQAELEAIRNKIRETFTPLVQTLKAQNKALRIGVNHGSLAERMLFMYGDTPEGMVESALEYAEICAEQDFHNVVLSFKASRPQVMLAAYRLAARRFDALGLNYPFHLGVTEAGDGEYGRIKSAVGIGTLLAEGIGDTIRVSLTEAPEKEIPVAYGILQALNLRKTMVEYVACPSCGRTLFNLEEVLQKVRAATQHLVGLDIAVMGCIVNGPGEMADADYGYVGKTPGYISLYRGKEEVKKVPESEGVQALIELIKADGRWVDPPEGSPSN.

The span at 1 to 12 (MQTLDRPNAPSQ) shows a compositional bias: polar residues. Positions 1 to 22 (MQTLDRPNAPSQQPYPEPVYPR) are disordered. 4 residues coordinate [4Fe-4S] cluster: C314, C317, C348, and E355.

Belongs to the IspG family. It depends on [4Fe-4S] cluster as a cofactor.

The enzyme catalyses (2E)-4-hydroxy-3-methylbut-2-enyl diphosphate + 2 oxidized [2Fe-2S]-[ferredoxin] + H2O = 2-C-methyl-D-erythritol 2,4-cyclic diphosphate + 2 reduced [2Fe-2S]-[ferredoxin] + H(+). It participates in isoprenoid biosynthesis; isopentenyl diphosphate biosynthesis via DXP pathway; isopentenyl diphosphate from 1-deoxy-D-xylulose 5-phosphate: step 5/6. Converts 2C-methyl-D-erythritol 2,4-cyclodiphosphate (ME-2,4cPP) into 1-hydroxy-2-methyl-2-(E)-butenyl 4-diphosphate. The chain is 4-hydroxy-3-methylbut-2-en-1-yl diphosphate synthase (ferredoxin) from Synechococcus sp. (strain JA-3-3Ab) (Cyanobacteria bacterium Yellowstone A-Prime).